The chain runs to 690 residues: Eukaryotic translation initiation factor 3 subunit B (690 aa).

The segment covering 1 to 11 has biased composition (basic and acidic residues); it reads MAKKKSEEHSG. The disordered stretch occupies residues 1–36; it reads MAKKKSEEHSGADANDSDYQEEPNFEDPPGFVDNIS. Positions 15 to 25 are enriched in acidic residues; that stretch reads NDSDYQEEPNF. An RRM domain is found at 57–141; sequence SVVVVDNIPK…HTFAVNLFTD (85 aa). WD repeat units lie at residues 207-246, 293-331, 334-369, 442-484, and 530-575; these read TRER…KIQK, DGMS…LLDL, IKIP…TLME, EIRE…KPSL, and PDHF…IKRT. Residues 595–645 adopt a coiled-coil conformation; that stretch reads EEKQKEIKKNLKKYYAAFEQKDRLRLTRASKELLEKRSQLRETFMEYRNKR.

It belongs to the eIF-3 subunit B family. In terms of assembly, component of the eukaryotic translation initiation factor 3 (eIF-3) complex. The eIF-3 complex interacts with pix. Interacts with mxt.

Its subcellular location is the cytoplasm. In terms of biological role, RNA-binding component of the eukaryotic translation initiation factor 3 (eIF-3) complex, which is involved in protein synthesis of a specialized repertoire of mRNAs and, together with other initiation factors, stimulates binding of mRNA and methionyl-tRNAi to the 40S ribosome. The eIF-3 complex specifically targets and initiates translation of a subset of mRNAs involved in cell proliferation. This is Eukaryotic translation initiation factor 3 subunit B from Drosophila erecta (Fruit fly).